A 397-amino-acid polypeptide reads, in one-letter code: Enoyl-[acyl-carrier-protein] reductase [NADH] (397 aa).

NAD(+)-binding positions include glycine 48 to tyrosine 53, phenylalanine 74 to glutamate 75, aspartate 111 to alanine 112, and valine 139 to alanine 140. Residue tyrosine 225 participates in substrate binding. The Proton donor role is filled by tyrosine 235. Residues lysine 244 and valine 273 to threonine 275 each bind NAD(+).

The protein belongs to the TER reductase family. As to quaternary structure, monomer.

The enzyme catalyses a 2,3-saturated acyl-[ACP] + NAD(+) = a (2E)-enoyl-[ACP] + NADH + H(+). It functions in the pathway lipid metabolism; fatty acid biosynthesis. Functionally, involved in the final reduction of the elongation cycle of fatty acid synthesis (FAS II). Catalyzes the reduction of a carbon-carbon double bond in an enoyl moiety that is covalently linked to an acyl carrier protein (ACP). In Burkholderia pseudomallei (strain K96243), this protein is Enoyl-[acyl-carrier-protein] reductase [NADH].